A 129-amino-acid polypeptide reads, in one-letter code: Sulfurtransferase TusD (129 aa).

The active-site Cysteine persulfide intermediate is the cysteine 79.

Belongs to the DsrE/TusD family. As to quaternary structure, heterohexamer, formed by a dimer of trimers. The hexameric TusBCD complex contains 2 copies each of TusB, TusC and TusD. The TusBCD complex interacts with TusE.

Its subcellular location is the cytoplasm. Part of a sulfur-relay system required for 2-thiolation of 5-methylaminomethyl-2-thiouridine (mnm(5)s(2)U) at tRNA wobble positions. Accepts sulfur from TusA and transfers it in turn to TusE. This chain is Sulfurtransferase TusD, found in Pectobacterium atrosepticum (strain SCRI 1043 / ATCC BAA-672) (Erwinia carotovora subsp. atroseptica).